Consider the following 314-residue polypeptide: tRNA dimethylallyltransferase (314 aa).

Residue 12–19 (GPTASGKT) coordinates ATP. Position 14–19 (14–19 (TASGKT)) interacts with substrate. Interaction with substrate tRNA regions lie at residues 37–40 (DSAQ) and 161–165 (QRIQR).

The protein belongs to the IPP transferase family. In terms of assembly, monomer. The cofactor is Mg(2+).

The catalysed reaction is adenosine(37) in tRNA + dimethylallyl diphosphate = N(6)-dimethylallyladenosine(37) in tRNA + diphosphate. Catalyzes the transfer of a dimethylallyl group onto the adenine at position 37 in tRNAs that read codons beginning with uridine, leading to the formation of N6-(dimethylallyl)adenosine (i(6)A). The sequence is that of tRNA dimethylallyltransferase from Nitrosococcus oceani (strain ATCC 19707 / BCRC 17464 / JCM 30415 / NCIMB 11848 / C-107).